Here is a 107-residue protein sequence, read N- to C-terminus: MKFMAENRLTLTKGTAKDIIERFYTRHGIETLEGFDGMFVTQTLEQEDFDEVKILTVWKSKQAFTDWLKSDVFKAAHKHVRSKNEDESSPIINNKVITYDIGYSYMK.

Positions 3 to 92 constitute an ABM domain; that stretch reads FMAENRLTLT…KNEDESSPII (90 aa). A Fe cation-binding site is contributed by asparagine 7. Heme-binding positions include 22 to 29 and histidine 77; that span reads RFYTRHGI.

It belongs to the antibiotic biosynthesis monooxygenase family. Heme-degrading monooxygenase IsdG subfamily. As to quaternary structure, homodimer.

Its subcellular location is the cytoplasm. The enzyme catalyses heme b + 5 AH2 + 4 O2 + 2 H(+) = delta-staphylobilin + Fe(2+) + formaldehyde + 5 A + 4 H2O. It carries out the reaction heme b + 5 AH2 + 4 O2 + 2 H(+) = beta-staphylobilin + Fe(2+) + formaldehyde + 5 A + 4 H2O. Allows bacterial pathogens to use the host heme as an iron source. Catalyzes the oxidative degradation of the heme macrocyclic porphyrin ring to the oxo-bilirubin chromophore staphylobilin (a mixture of the linear tetrapyrroles 5-oxo-delta-bilirubin and 15-oxo-beta-bilirubin) in the presence of a suitable electron donor such as ascorbate or NADPH--cytochrome P450 reductase, with subsequent release of free iron. The polypeptide is Heme oxygenase (staphylobilin-producing) (isdG) (Staphylococcus aureus (strain bovine RF122 / ET3-1)).